The chain runs to 73 residues: Conotoxin Cl9.2 (73 aa).

An N-terminal signal peptide occupies residues Met1–Ala18. The propeptide occupies Glu19–Thr41. 3 cysteine pairs are disulfide-bonded: Cys46/Cys61, Cys52/Cys63, and Cys58/Cys72.

In terms of tissue distribution, expressed by the venom duct.

It localises to the secreted. This is Conotoxin Cl9.2 from Californiconus californicus (California cone).